The sequence spans 285 residues: mRNA decay factor CTH2 (285 aa).

The interval 37-55 is required for mRNA decay activity; sequence INIRELEEYYNKTILNEDN. The tract at residues 132 to 164 is disordered; it reads LQQLSQQKPKNDASFSSEKESSAQPKVKSQVQE. Over residues 153 to 164 the composition is skewed to polar residues; that stretch reads SAQPKVKSQVQE. C3H1-type zinc fingers lie at residues 169–197 and 207–235; these read LYKT…HGLG and NFRT…HGDD. Residues 252–271 form a disordered region; sequence STSKQSDEKRSNGRGSAKKK.

In terms of assembly, interacts with DHH1.

The protein resides in the nucleus. It is found in the cytoplasm. Its subcellular location is the P-body. In terms of biological role, binds to specific AU-rich elements (ARE) in the 3'-untranslated region of target mRNAs and promotes their degradation. In response to iron deficiency, promotes the decay of many mRNAs encoding proteins involved in iron-dependent pathways. Recruits the DHH1 helicase to the SDH4 mRNA and promotes SDH4 mRNA decay. Also destabilizes target mRNA by modulating 3'-end processing, creating extended transcripts that are prone for degradation. This chain is mRNA decay factor CTH2 (TIS11), found in Saccharomyces cerevisiae (strain ATCC 204508 / S288c) (Baker's yeast).